The following is a 245-amino-acid chain: DNA repair protein RecO (245 aa).

This sequence belongs to the RecO family.

Its function is as follows. Involved in DNA repair and RecF pathway recombination. The polypeptide is DNA repair protein RecO (Chromobacterium violaceum (strain ATCC 12472 / DSM 30191 / JCM 1249 / CCUG 213 / NBRC 12614 / NCIMB 9131 / NCTC 9757 / MK)).